The chain runs to 294 residues: Proline iminopeptidase (294 aa).

Residues 28 to 278 (PLLLLHGGPG…GCGHMPFVQE (251 aa)) enclose the AB hydrolase-1 domain. The active-site Nucleophile is the serine 106. Aspartate 245 is a catalytic residue. The active-site Proton donor is histidine 272.

Belongs to the peptidase S33 family. Homotrimer.

It is found in the cell envelope. The enzyme catalyses Release of N-terminal proline from a peptide.. Its activity is regulated as follows. Inhibited by 3,4-DCI, but no significant effect on enzyme activity by pepstatin A, E-64, 1,10-phenanthroline or EDTA. Its function is as follows. Releases the N-terminal proline from various substrates. Cleaves Pro-betaNA (L-prolyl-beta-naphthylamide) effectively. The polypeptide is Proline iminopeptidase (pip) (Lactobacillus delbrueckii subsp. lactis).